The primary structure comprises 501 residues: ATP synthase subunit alpha (501 aa).

169 to 176 (GDRQTGKT) serves as a coordination point for ATP.

Belongs to the ATPase alpha/beta chains family. In terms of assembly, F-type ATPases have 2 components, CF(1) - the catalytic core - and CF(0) - the membrane proton channel. CF(1) has five subunits: alpha(3), beta(3), gamma(1), delta(1), epsilon(1). CF(0) has three main subunits: a(1), b(2) and c(9-12). The alpha and beta chains form an alternating ring which encloses part of the gamma chain. CF(1) is attached to CF(0) by a central stalk formed by the gamma and epsilon chains, while a peripheral stalk is formed by the delta and b chains.

It localises to the cell membrane. The catalysed reaction is ATP + H2O + 4 H(+)(in) = ADP + phosphate + 5 H(+)(out). Functionally, produces ATP from ADP in the presence of a proton gradient across the membrane. The alpha chain is a regulatory subunit. In Streptococcus pneumoniae (strain Hungary19A-6), this protein is ATP synthase subunit alpha.